A 287-amino-acid chain; its full sequence is Succinate--CoA ligase [ADP-forming] subunit alpha 2 (287 aa).

Residues 17 to 20 (TGYQ), Lys43, and 96 to 98 (ITE) contribute to the CoA site. Tyr159 contacts substrate. His246 acts as the Tele-phosphohistidine intermediate in catalysis.

The protein belongs to the succinate/malate CoA ligase alpha subunit family. Heterotetramer of two alpha and two beta subunits.

It catalyses the reaction succinate + ATP + CoA = succinyl-CoA + ADP + phosphate. The catalysed reaction is GTP + succinate + CoA = succinyl-CoA + GDP + phosphate. The protein operates within carbohydrate metabolism; tricarboxylic acid cycle; succinate from succinyl-CoA (ligase route): step 1/1. Succinyl-CoA synthetase functions in the citric acid cycle (TCA), coupling the hydrolysis of succinyl-CoA to the synthesis of either ATP or GTP and thus represents the only step of substrate-level phosphorylation in the TCA. The alpha subunit of the enzyme binds the substrates coenzyme A and phosphate, while succinate binding and nucleotide specificity is provided by the beta subunit. The sequence is that of Succinate--CoA ligase [ADP-forming] subunit alpha 2 from Archaeoglobus fulgidus (strain ATCC 49558 / DSM 4304 / JCM 9628 / NBRC 100126 / VC-16).